The following is a 149-amino-acid chain: UPF0260 protein PFL_1499 (149 aa).

This sequence belongs to the UPF0260 family.

This is UPF0260 protein PFL_1499 from Pseudomonas fluorescens (strain ATCC BAA-477 / NRRL B-23932 / Pf-5).